Consider the following 205-residue polypeptide: Transmembrane emp24 domain-containing protein A (205 aa).

The N-terminal stretch at 1–24 is a signal peptide; that stretch reads MMNNKLLLLVIALLCIASNSIVES. At 25–172 the chain is on the lumenal side; that stretch reads FSFKVSAKVE…RNTAESTNSR (148 aa). In terms of domain architecture, GOLD spans 34–116; it reads EECIYEEIGV…DKTVSFILSV (83 aa). A helical membrane pass occupies residues 173–193; that stretch reads VLWWSVFEAFVLIALSIWQIY. Residues 194-205 are Cytoplasmic-facing; the sequence is YLRRFFEVKRAV.

This sequence belongs to the EMP24/GP25L family.

The protein resides in the cytoplasmic vesicle membrane. Its function is as follows. Could have a role in the budding of coatomer-coated and other species of coated vesicles. The chain is Transmembrane emp24 domain-containing protein A (empA) from Dictyostelium discoideum (Social amoeba).